Consider the following 480-residue polypeptide: Glutamate--tRNA ligase (480 aa).

Residues 9–19 (PSPTGNLHIGT) carry the 'HIGH' region motif. The 'KMSKS' region signature appears at 247-251 (KLSKR). Lys-250 serves as a coordination point for ATP.

This sequence belongs to the class-I aminoacyl-tRNA synthetase family. Glutamate--tRNA ligase type 1 subfamily. Monomer.

It is found in the cytoplasm. The enzyme catalyses tRNA(Glu) + L-glutamate + ATP = L-glutamyl-tRNA(Glu) + AMP + diphosphate. Its function is as follows. Catalyzes the attachment of glutamate to tRNA(Glu) in a two-step reaction: glutamate is first activated by ATP to form Glu-AMP and then transferred to the acceptor end of tRNA(Glu). The polypeptide is Glutamate--tRNA ligase (Nostoc sp. (strain PCC 7120 / SAG 25.82 / UTEX 2576)).